We begin with the raw amino-acid sequence, 57 residues long: MAVQQRRSSKHRRDKRRSHDALTAQALSVCQKCGKKKLFHRVCSCGMYGDLRVKKAY.

Residues 1–21 are disordered; the sequence is MAVQQRRSSKHRRDKRRSHDA. The span at 7-18 shows a compositional bias: basic residues; that stretch reads RSSKHRRDKRRS.

This sequence belongs to the bacterial ribosomal protein bL32 family.

This chain is Large ribosomal subunit protein bL32 (rpmF), found in Mycoplasma pneumoniae (strain ATCC 29342 / M129 / Subtype 1) (Mycoplasmoides pneumoniae).